A 241-amino-acid polypeptide reads, in one-letter code: uncharacterized protein (241 aa).

The region spanning Ser-22–Val-78 is the Cupin type-2 domain. The 99-residue stretch at Tyr-137–Thr-235 folds into the HTH araC/xylS-type domain. DNA-binding regions (H-T-H motif) lie at residues Lys-154–Thr-175 and Leu-202–Thr-225.

This is an uncharacterized protein from Bacillus subtilis (strain 168).